The chain runs to 344 residues: Protein RecA (344 aa).

65–72 (GPESSGKT) contacts ATP.

This sequence belongs to the RecA family.

It is found in the cytoplasm. Functionally, can catalyze the hydrolysis of ATP in the presence of single-stranded DNA, the ATP-dependent uptake of single-stranded DNA by duplex DNA, and the ATP-dependent hybridization of homologous single-stranded DNAs. It interacts with LexA causing its activation and leading to its autocatalytic cleavage. The sequence is that of Protein RecA from Nitratiruptor sp. (strain SB155-2).